Here is a 2472-residue protein sequence, read N- to C-terminus: Centrosomal protein of 290 kDa (2472 aa).

Residues 1–689 (MPPNIKWKEL…MESKNAEGIF (689 aa)) form a self-association (with itself or C-terminus) region. Coiled coils occupy residues 59–747 (MKMK…LRQS), 1129–1392 (RQRI…QQSK), and 1459–1492 (QVIL…ILSR). The tract at residues 128–164 (DRELEDMEKELDKEKKVNEQLALRNEEAENENSKLRR) is disordered. A compositionally biased stretch (basic and acidic residues) spans 137–164 (ELDKEKKVNEQLALRNEEAENENSKLRR). The tract at residues 690–890 (DASLHLKAQV…TVLQVNEKSL (201 aa)) is interaction with IQCB1. Disordered regions lie at residues 1691-1713 (AHKD…SRAP) and 2451-2472 (PSPL…FPIY). Residues 1697–1713 (SLKSELQAQKEANSRAP) show a composition bias toward polar residues. The tract at residues 1960–2472 (TTGMTVDQVL…GESPHSFPIY (513 aa)) is self-association (with itself or N-terminus).

In terms of assembly, part of the tectonic-like complex (also named B9 complex). Interacts with ATF4 via its N-terminal region. Associates with the BBSome complex, interacting (via N-terminus) with BBS4. Interacts with IQCB1/NPHP5; IQCB1 and CEP290/NPHP6 are proposed to form a functional NPHP5-6 module localized to the centrosome. Interacts with NPHP4; the interaction likely requires additional interactors. Interacts with ZNF423, FAM161A, CEP162, CEP162, CEP131, TALPID3, CCDC13, CC2D2A, RPGRIP1. Can self-associate (homo- or heteromeric). Interacts with CCP110; required for suppressing cilia formation. Interacts with RPGR. Associates (via C-terminus) with microtubules; association to microtubule is reduced in response to cellular stress, such as ultraviolet light (UV) radiation or heat shock, in a process that requires p38 MAP kinase signaling. Interacts with FAM161A. Interacts with PCM1. Interacts with CCDC66. Interacts with ARMC9 and CSPP1. Ubiquitinated. May undergo monoubiquitination; monoubiquitination is inhibited in response to cellular stress, such as ultraviolet light (UV) radiation or heat shock, but does not cause its displacement from centriolar satellites. As to expression, expressed in multiple organs during early postnatal development, with highest levels in hindbrain.

Its subcellular location is the cytoplasm. It localises to the cytoskeleton. The protein resides in the microtubule organizing center. It is found in the centrosome. The protein localises to the centriolar satellite. Its subcellular location is the nucleus. It localises to the centriole. The protein resides in the cell projection. It is found in the cilium. The protein localises to the cilium basal body. Its subcellular location is the cytoplasmic vesicle. Its function is as follows. Involved in early and late steps in cilia formation. Its association with CCP110 is required for inhibition of primary cilia formation by CCP110. May play a role in early ciliogenesis in the disappearance of centriolar satellites and in the transition of primary ciliar vesicles (PCVs) to capped ciliary vesicles (CCVs). Required for the centrosomal recruitment of RAB8A and for the targeting of centriole satellite proteins to centrosomes such as of PCM1. Required for the correct localization of ciliary and phototransduction proteins in retinal photoreceptor cells; may play a role in ciliary transport processes. Required for efficient recruitment of RAB8A to primary cilium. In the ciliary transition zone is part of the tectonic-like complex (also named B9 complex) which is required for tissue-specific ciliogenesis and may regulate ciliary membrane composition. Involved in regulation of the BBSome complex integrity, specifically for presence of BBS2, BBS5 and BBS8/TTC8 in the complex, and in ciliary targeting of selected BBSome cargos. May play a role in controlling entry of the BBSome complex to cilia possibly implicating IQCB1/NPHP5. Activates ATF4-mediated transcription. In Mus musculus (Mouse), this protein is Centrosomal protein of 290 kDa.